A 379-amino-acid polypeptide reads, in one-letter code: Alcohol dehydrogenase class-3 (379 aa).

S2 carries the N-acetylserine modification. 7 residues coordinate Zn(2+): C48, H70, C100, C103, C106, C114, and C177.

It belongs to the zinc-containing alcohol dehydrogenase family. Class-III subfamily. It depends on Zn(2+) as a cofactor.

It catalyses the reaction a primary alcohol + NAD(+) = an aldehyde + NADH + H(+). The catalysed reaction is a secondary alcohol + NAD(+) = a ketone + NADH + H(+). The enzyme catalyses S-(hydroxymethyl)glutathione + NADP(+) = S-formylglutathione + NADPH + H(+). It carries out the reaction S-(hydroxymethyl)glutathione + NAD(+) = S-formylglutathione + NADH + H(+). It catalyses the reaction octan-1-ol + NAD(+) = octanal + NADH + H(+). In terms of biological role, class-III ADH is remarkably ineffective in oxidizing ethanol, but it readily catalyzes the oxidation of long-chain primary alcohols and the oxidation of S-(hydroxymethyl) glutathione. In Drosophila melanogaster (Fruit fly), this protein is Alcohol dehydrogenase class-3 (Fdh).